We begin with the raw amino-acid sequence, 127 residues long: S-adenosylmethionine decarboxylase proenzyme (127 aa).

The active-site Schiff-base intermediate with substrate; via pyruvic acid is the serine 63. Serine 63 is subject to Pyruvic acid (Ser); by autocatalysis. The Proton acceptor; for processing activity role is filled by histidine 68. Cysteine 83 acts as the Proton donor; for catalytic activity in catalysis.

It belongs to the prokaryotic AdoMetDC family. Type 1 subfamily. Heterotetramer of two alpha and two beta chains arranged as a dimer of alpha/beta heterodimers. It depends on pyruvate as a cofactor. In terms of processing, is synthesized initially as an inactive proenzyme. Formation of the active enzyme involves a self-maturation process in which the active site pyruvoyl group is generated from an internal serine residue via an autocatalytic post-translational modification. Two non-identical subunits are generated from the proenzyme in this reaction, and the pyruvate is formed at the N-terminus of the alpha chain, which is derived from the carboxyl end of the proenzyme. The post-translation cleavage follows an unusual pathway, termed non-hydrolytic serinolysis, in which the side chain hydroxyl group of the serine supplies its oxygen atom to form the C-terminus of the beta chain, while the remainder of the serine residue undergoes an oxidative deamination to produce ammonia and the pyruvoyl group blocking the N-terminus of the alpha chain.

It catalyses the reaction S-adenosyl-L-methionine + H(+) = S-adenosyl 3-(methylsulfanyl)propylamine + CO2. Its pathway is amine and polyamine biosynthesis; S-adenosylmethioninamine biosynthesis; S-adenosylmethioninamine from S-adenosyl-L-methionine: step 1/1. In terms of biological role, catalyzes the decarboxylation of S-adenosylmethionine to S-adenosylmethioninamine (dcAdoMet), the propylamine donor required for the synthesis of the polyamines spermine and spermidine from the diamine putrescine. In Carboxydothermus hydrogenoformans (strain ATCC BAA-161 / DSM 6008 / Z-2901), this protein is S-adenosylmethionine decarboxylase proenzyme.